A 424-amino-acid polypeptide reads, in one-letter code: D-inositol 3-phosphate glycosyltransferase (424 aa).

Histidine 9 serves as a coordination point for 1D-myo-inositol 3-phosphate. UDP-N-acetyl-alpha-D-glucosamine is bound by residues 15-16 (QP) and glycine 23. Residues 20-25 (DSGGMN), lysine 78, tyrosine 110, threonine 134, and arginine 154 contribute to the 1D-myo-inositol 3-phosphate site. The UDP-N-acetyl-alpha-D-glucosamine site is built by arginine 231, lysine 236, and arginine 294. Tyrosine 303, arginine 304, and alanine 306 together coordinate Mg(2+). UDP-N-acetyl-alpha-D-glucosamine contacts are provided by glutamate 316 and glutamate 324. Threonine 330 lines the Mg(2+) pocket.

It belongs to the glycosyltransferase group 1 family. MshA subfamily. As to quaternary structure, homodimer.

The catalysed reaction is 1D-myo-inositol 3-phosphate + UDP-N-acetyl-alpha-D-glucosamine = 1D-myo-inositol 2-acetamido-2-deoxy-alpha-D-glucopyranoside 3-phosphate + UDP + H(+). In terms of biological role, catalyzes the transfer of a N-acetyl-glucosamine moiety to 1D-myo-inositol 3-phosphate to produce 1D-myo-inositol 2-acetamido-2-deoxy-glucopyranoside 3-phosphate in the mycothiol biosynthesis pathway. This chain is D-inositol 3-phosphate glycosyltransferase, found in Corynebacterium efficiens (strain DSM 44549 / YS-314 / AJ 12310 / JCM 11189 / NBRC 100395).